The primary structure comprises 190 residues: Probable nicotinate-nucleotide adenylyltransferase (190 aa).

The protein belongs to the NadD family.

The catalysed reaction is nicotinate beta-D-ribonucleotide + ATP + H(+) = deamido-NAD(+) + diphosphate. Its pathway is cofactor biosynthesis; NAD(+) biosynthesis; deamido-NAD(+) from nicotinate D-ribonucleotide: step 1/1. In terms of biological role, catalyzes the reversible adenylation of nicotinate mononucleotide (NaMN) to nicotinic acid adenine dinucleotide (NaAD). The polypeptide is Probable nicotinate-nucleotide adenylyltransferase (Myxococcus xanthus (strain DK1622)).